Reading from the N-terminus, the 237-residue chain is MATPHINAEMGDFADVVLMPGDPLRAKHIAETFLQDVRQVNNVRGMLGFTGTYKGRKISVMGHGMGIPSCSIYAKELITDFGVKKIIRVGSCGAVSMDVKLRDVVIGMGACTDSKVNRLRFKDNDFAAIADFDMVRNAADAAKAKGIDARVGNLFSADLFYSPDPTMFDVMEKYGILGVEMEAAGIYGVAAEFGVKALTICTVSDHIRTHEQTTAAERQTTFNDMIEIALESVLLGD.

His-5 provides a ligand contact to a purine D-ribonucleoside. Phosphate contacts are provided by residues Gly-21, Arg-25, Arg-44, and Arg-88–Ser-91. A purine D-ribonucleoside contacts are provided by residues Glu-180–Glu-182 and Ser-204–Asp-205. Asp-205 acts as the Proton donor in catalysis.

The protein belongs to the PNP/UDP phosphorylase family. As to quaternary structure, homohexamer; trimer of homodimers.

It carries out the reaction a purine D-ribonucleoside + phosphate = a purine nucleobase + alpha-D-ribose 1-phosphate. It catalyses the reaction a purine 2'-deoxy-D-ribonucleoside + phosphate = a purine nucleobase + 2-deoxy-alpha-D-ribose 1-phosphate. Its function is as follows. Catalyzes the reversible phosphorolytic breakdown of the N-glycosidic bond in the beta-(deoxy)ribonucleoside molecules, with the formation of the corresponding free purine bases and pentose-1-phosphate. This Edwardsiella ictaluri (strain 93-146) protein is Purine nucleoside phosphorylase DeoD-type.